Here is a 171-residue protein sequence, read N- to C-terminus: UPF0725 protein At3g25080 (171 aa).

This sequence belongs to the UPF0725 (EMB2204) family.

The protein is UPF0725 protein At3g25080 of Arabidopsis thaliana (Mouse-ear cress).